The primary structure comprises 1360 residues: Zinc finger protein GLI1 (1360 aa).

The segment at 198 to 245 (DTIGSKRLEDGSEGDISSPASVGTQDPLLGLLDGRDDLEKDDGKHEPE) is disordered. The span at 230–245 (DGRDDLEKDDGKHEPE) shows a compositional bias: basic and acidic residues. The segment at 250–275 (TNCHWESCTKEFDTQEHLVHHINNEH) adopts a C2H2-type 1 zinc-finger fold. The interval 298–306 (KAQYMLVVH) is interaction with DNA. 3 consecutive C2H2-type zinc fingers follow at residues 316-340 (HKCT…LRSH), 346-371 (YVCE…NRTH), and 377-402 (YVCK…KTVH). 2 interaction with DNA regions span residues 360-365 (ASDRAK) and 390-396 (DPSSLRK). Disordered regions lie at residues 390–434 (DPSS…NVKG), 457–500 (ITLK…SFED), 718–740 (IIHP…RTGG), and 1120–1213 (YMNY…IQPQ). A compositionally biased stretch (low complexity) spans 461-473 (SQPSPGGQSSCSS). A compositionally biased stretch (polar residues) spans 474–496 (ERSPLGSTNNNDSGVEMNANTGG). Low complexity predominate over residues 1134-1143 (SPSSQDSQSS). The segment covering 1173-1190 (RQHSVSSQSTYMGSPNQL) has biased composition (polar residues).

The protein belongs to the GLI C2H2-type zinc-finger protein family.

The protein resides in the cytoplasm. It localises to the nucleus. Acts as a transcriptional activator. Binds to the DNA consensus sequence 5'-GACCACCCA-3'. May regulate the transcription of specific genes during normal development. Mediates SHH signaling. Plays a role in cell proliferation and differentiation via its role in SHH signaling. This chain is Zinc finger protein GLI1 (gli1), found in Xenopus laevis (African clawed frog).